The following is a 405-amino-acid chain: Divinyl chlorophyllide a 8-vinyl-reductase, chloroplastic (405 aa).

The N-terminal 58 residues, 1–58, are a transit peptide targeting the chloroplast; it reads MAALLLSSHLTAASSSSTTSPTARPAPSFVSFRAANAAPKGARRGWPFLASSVEPPPA.

It is found in the plastid. It localises to the chloroplast. The catalysed reaction is protochlorophyllide a + NADP(+) = 3,8-divinyl protochlorophyllide a + NADPH + H(+). Its pathway is porphyrin-containing compound metabolism; chlorophyll biosynthesis. Catalyzes the conversion of divinyl chlorophyllide to monovinyl chlorophyllide. Reduces the 8-vinyl group of the tetrapyrrole to an ethyl group using NADPH as the reductant. Can use (3,8-divinyl)-chlorophyllide a (DV-Chlidea) &gt; (3,8-divinyl)-chlorophyll a (DV-Chla) &gt; (3,8-divinyl)-protochlorophyllide a (DV-Pchlidea) &gt; (3,8-divinyl)-magnesium-protoporphyrin IX monomethyl ester (DV-MPE) &gt; (3,8-divinyl)-magnesium-protoporphyrin IX (DV-Mg-Proto) as substrates. The protein is Divinyl chlorophyllide a 8-vinyl-reductase, chloroplastic (DVR) of Oryza sativa subsp. indica (Rice).